A 94-amino-acid chain; its full sequence is MKIKPLGDRVVIKMLESEETTKSGIVLPGSAKEKPQVAEIVAVGPGTVVDGKEVKMEVKVGDRVLTSKYSGTEVKFDGQEYTILKQGDILAIVE.

This sequence belongs to the GroES chaperonin family. In terms of assembly, heptamer of 7 subunits arranged in a ring. Interacts with the chaperonin GroEL.

It localises to the cytoplasm. In terms of biological role, together with the chaperonin GroEL, plays an essential role in assisting protein folding. The GroEL-GroES system forms a nano-cage that allows encapsulation of the non-native substrate proteins and provides a physical environment optimized to promote and accelerate protein folding. GroES binds to the apical surface of the GroEL ring, thereby capping the opening of the GroEL channel. The polypeptide is Co-chaperonin GroES (Ruminiclostridium cellulolyticum (strain ATCC 35319 / DSM 5812 / JCM 6584 / H10) (Clostridium cellulolyticum)).